Here is a 411-residue protein sequence, read N- to C-terminus: MNSPPKVSVLITVTGVDQPGVTATLFEVLSGHGVELLNVEQVVIRHRLTLGVLVCCPADVADGPALRHDVEAAIRKVGLDVSIERSDDVPIIREPSTHTIFVLGRPITAAAFGAVAREVAALGVNIDLIRGVSDYPVIGLELRVSVPPGADGALRTALNRVSSEEHVDVAVEDYTLERRAKRLIVFDVDSTLVQGEVIEMLAAKAGAEGQVAAITDAAMRGELDFAQSLQQRVATLAGLPATVIDEVAGQLELMPGARTTLRTLRRLGYACGVVSGGFRRIIEPLAEELMLDYVAANELEIVDGTLTGRVVGPIIDRAGKATALREFAQRAGVPMAQTVAVGDGANDIDMLAAAGLGIAFNAKPALREVADASLSHPYLDTVLFLLGVTRGEIEAADAIDGEVRRVEIPPE.

An ACT domain is found at 10–88 (LITVTGVDQP…LDVSIERSDD (79 aa)). Asp187 functions as the Nucleophile in the catalytic mechanism. Positions 187 and 189 each coordinate Mg(2+). The active-site Proton donor is Asp189. Substrate-binding positions include Glu196, Arg232, 275-276 (SG), and Lys320. Residue Asp343 coordinates Mg(2+). Asn346 contacts substrate.

Belongs to the HAD-like hydrolase superfamily. SerB family. As to quaternary structure, homodimer. It depends on Mg(2+) as a cofactor.

It catalyses the reaction O-phospho-L-serine + H2O = L-serine + phosphate. It carries out the reaction O-phospho-D-serine + H2O = D-serine + phosphate. The protein operates within amino-acid biosynthesis; L-serine biosynthesis; L-serine from 3-phospho-D-glycerate: step 3/3. Catalyzes the dephosphorylation of phosphoserine (P-Ser). This Mycobacterium avium (strain 104) protein is Phosphoserine phosphatase (serB).